A 274-amino-acid chain; its full sequence is 4-diphosphocytidyl-2-C-methyl-D-erythritol kinase (274 aa).

Lysine 10 is a catalytic residue. 101 to 111 contributes to the ATP binding site; it reads PTQAGLGGGSA. Residue aspartate 143 is part of the active site.

It belongs to the GHMP kinase family. IspE subfamily.

It catalyses the reaction 4-CDP-2-C-methyl-D-erythritol + ATP = 4-CDP-2-C-methyl-D-erythritol 2-phosphate + ADP + H(+). Its pathway is isoprenoid biosynthesis; isopentenyl diphosphate biosynthesis via DXP pathway; isopentenyl diphosphate from 1-deoxy-D-xylulose 5-phosphate: step 3/6. Catalyzes the phosphorylation of the position 2 hydroxy group of 4-diphosphocytidyl-2C-methyl-D-erythritol. The protein is 4-diphosphocytidyl-2-C-methyl-D-erythritol kinase of Helicobacter pylori (strain HPAG1).